Reading from the N-terminus, the 587-residue chain is Sedolisin (587 aa).

The N-terminal stretch at 1–32 is a signal peptide; the sequence is MKSSAAKQTVLCLNRYAVVALPLAIASFAAFG. Positions 33-215 are cleaved as a propeptide — removed in mature form; sequence ASPASTLWAP…VGERSAAKTL (183 aa). In terms of domain architecture, Peptidase S53 spans 219–583; it reads TAKGHNPTEF…AKLSAYIRSN (365 aa). Positions 276–295 are disordered; the sequence is TIQTGSSNGDYSDDQQGQGE. Active-site charge relay system residues include Glu295 and Asp299. The cysteines at positions 352 and 391 are disulfide-linked. Residue Ser502 is the Charge relay system of the active site. Ca(2+) is bound by residues Asp543, Val544, Gly559, Gly561, and Asp563. Residues 586 to 587 constitute a propeptide, removed in mature form; that stretch reads GH.

The cofactor is Ca(2+). Post-translationally, autocatalytically processed.

The protein localises to the periplasm. It carries out the reaction Hydrolysis of the B chain of insulin at 13-Glu-|-Ala-14, 15-Leu-|-Tyr-16 and 25-Phe-|-Tyr-26 and angiotensin I at 4-Tyr-|-Ile-5. A good synthetic substrate is Lys-Pro-Ile-Glu-Phe-|-Phe(NO2)-Arg-Leu.. Its activity is regulated as follows. Inhibited by 1,2-epoxy-3-(p-nitrophenoxy)propane (EPNP), but not by carboxyl proteinase inhibitors, such as pepstatin, pepstatin Ac (S-PI) and diazoacetyl-DL-norleucine methyl ester (DAN). Inhibited by tyrostatin, pseudo-tyrostatin, AcIPF, AcIAF, chymostatin and pseudo-iodotyrostatin. Functionally, pepstatin-insensitive serine-carboxyl proteinase. In vitro can hydrolyze various synthetic peptides. Also shows activity on acid-denatured hemoglobin and on casein. In Pseudomonas sp. (strain 101) (Achromobacter parvulus T1), this protein is Sedolisin (pcp).